Consider the following 880-residue polypeptide: MOG interacting and ectopic P-granules protein 1 (880 aa).

Polar residues predominate over residues 1–20 (MVTSDETVLATTTNKTSITT). 3 disordered regions span residues 1 to 37 (MVTSDETVLATTTNKTSITTEPMEPKSSDESTDSETD), 82 to 257 (DKVE…DDNE), and 350 to 370 (ERPKLSDSEKRERQQMKQHNP). Residues 23 to 37 (MEPKSSDESTDSETD) show a composition bias toward basic and acidic residues. The span at 87-105 (ATNSVVDLSSNGSSATTSV) shows a compositional bias: polar residues. Positions 108 to 120 (EEQEEKANEDETN) are enriched in acidic residues. 2 stretches are compositionally biased toward basic and acidic residues: residues 154 to 170 (SKSDGETETDRVAIKDS) and 183 to 193 (KPEEKEEKNDT). The span at 215–224 (QLDDDDDDIQ) shows a compositional bias: acidic residues. 2 stretches are compositionally biased toward basic and acidic residues: residues 235–252 (QKTEETKQEPKQEAKAEP) and 350–364 (ERPKLSDSEKRERQQ). C2H2-type zinc fingers lie at residues 436–459 (SRCGVCGFQTESKLAMAAHKETLH) and 465–488 (FQCTLCKETDTNEQRMKEHYFEAH). The CCHC-type zinc finger occupies 501-523 (YPCAICEEDFNFKGVREQHYKQC). 4 C2H2-type zinc fingers span residues 728-751 (FQCEICDQTVHEKDKYLSHLQVLH), 768-791 (LACSRCRDRFWTYEGLERHLVMSH), 809-830 (GRCKTCGKQYAFNMLQHLVADH), and 841-864 (YSCDVCAFKCSSYQTLEAHLSSTH).

Interacts with hda-1, let-418, lin-1, mog-1, mog-4, mog-5, mog-6, pie-1 and unc-98.

The protein localises to the nucleus. Functionally, has a broad role in development, specifically in the genetic pathway SynMuvB that negatively regulates specification of the vulval cell fate. Required for fem-3 3'-UTR-mediated repression in the regulation of the sperm/oocyte switch. Acts by regulating the translation of fem-3 mRNA, by binding to its 3'-UTR. This Caenorhabditis briggsae protein is MOG interacting and ectopic P-granules protein 1.